Consider the following 320-residue polypeptide: ATP-dependent 6-phosphofructokinase (320 aa).

Position 12 (glycine 12) interacts with ATP. Residues 22–26 (RGVVR) and 55–60 (RYSVSD) each bind ADP. Residues 73–74 (RF) and 103–106 (GDGS) each bind ATP. Aspartate 104 is a binding site for Mg(2+). 126-128 (TID) serves as a coordination point for substrate. Catalysis depends on aspartate 128, which acts as the Proton acceptor. Arginine 155 is a binding site for ADP. Substrate is bound by residues arginine 163 and 170–172 (MGR). ADP-binding positions include 186-188 (GCE), lysine 212, and 214-216 (KKH). Substrate contacts are provided by residues glutamate 223, arginine 244, and 250–253 (HIQR).

The protein belongs to the phosphofructokinase type A (PFKA) family. ATP-dependent PFK group I subfamily. Prokaryotic clade 'B1' sub-subfamily. Homotetramer. The cofactor is Mg(2+).

It is found in the cytoplasm. It carries out the reaction beta-D-fructose 6-phosphate + ATP = beta-D-fructose 1,6-bisphosphate + ADP + H(+). It participates in carbohydrate degradation; glycolysis; D-glyceraldehyde 3-phosphate and glycerone phosphate from D-glucose: step 3/4. With respect to regulation, allosterically activated by ADP and other diphosphonucleosides, and allosterically inhibited by phosphoenolpyruvate. In terms of biological role, catalyzes the phosphorylation of D-fructose 6-phosphate to fructose 1,6-bisphosphate by ATP, the first committing step of glycolysis. The chain is ATP-dependent 6-phosphofructokinase from Buchnera aphidicola subsp. Baizongia pistaciae (strain Bp).